We begin with the raw amino-acid sequence, 215 residues long: Probable phosphoglycerate mutase GpmB (215 aa).

Residues 8 to 15, 21 to 22, arginine 58, arginine 60, 82 to 85, 104 to 105, and 151 to 152 each bind substrate; these read RHGETQWN, QG, ELDM, RR, and GI. Histidine 9 serves as the catalytic Tele-phosphohistidine intermediate. Glutamate 82 (proton donor/acceptor) is an active-site residue.

This sequence belongs to the phosphoglycerate mutase family. GpmB subfamily.

The enzyme catalyses (2R)-2-phosphoglycerate = (2R)-3-phosphoglycerate. Its pathway is carbohydrate degradation; glycolysis; pyruvate from D-glyceraldehyde 3-phosphate: step 3/5. This Klebsiella pneumoniae subsp. pneumoniae (strain ATCC 700721 / MGH 78578) protein is Probable phosphoglycerate mutase GpmB.